We begin with the raw amino-acid sequence, 87 residues long: Small ribosomal subunit protein uS17 (87 aa).

Belongs to the universal ribosomal protein uS17 family. Part of the 30S ribosomal subunit.

Its function is as follows. One of the primary rRNA binding proteins, it binds specifically to the 5'-end of 16S ribosomal RNA. This chain is Small ribosomal subunit protein uS17, found in Bacillus cytotoxicus (strain DSM 22905 / CIP 110041 / 391-98 / NVH 391-98).